A 210-amino-acid chain; its full sequence is Large ribosomal subunit protein uL16 (210 aa).

The protein belongs to the universal ribosomal protein uL16 family. In terms of assembly, component of the large ribosomal subunit. Mature ribosomes consist of a small (40S) and a large (60S) subunit. The 40S subunit contains about 33 different proteins and 1 molecule of RNA (18S). The 60S subunit contains about 49 different proteins and 3 molecules of RNA (28S, 5.8S and 5S).

The protein localises to the cytoplasm. Its function is as follows. Component of the large ribosomal subunit. Plays a role in the formation of actively translating ribosomes. In terms of biological role, (Microbial infection) Seems to bind to the leucine zipper of viral and cellular JUN. The polypeptide is Large ribosomal subunit protein uL16 (Gallus gallus (Chicken)).